Here is a 746-residue protein sequence, read N- to C-terminus: NAD(P)H-quinone oxidoreductase subunit 5, chloroplastic (746 aa).

A run of 16 helical transmembrane segments spans residues 9–29 (WIIP…LLLF), 40–60 (WTFL…YLSI), 89–109 (IDPL…LVLI), 125–145 (FAYM…SNLI), 147–167 (VYFF…FWFT), 185–205 (GDFG…SFEF), 221–241 (VNLL…IAKS), 258–278 (TPIS…FLVA), 280–300 (LLPL…IGII), 327–347 (LGYM…FHLI), 354–374 (ALLF…VGYS), 396–416 (IAFL…CFWS), 425–445 (LLFS…TAFY), 547–567 (ILFP…IGIP), 608–628 (FSVS…KPFY), and 723–743 (YLFL…FFYF).

The protein belongs to the complex I subunit 5 family. NDH is composed of at least 16 different subunits, 5 of which are encoded in the nucleus.

It is found in the plastid. It localises to the chloroplast thylakoid membrane. The catalysed reaction is a plastoquinone + NADH + (n+1) H(+)(in) = a plastoquinol + NAD(+) + n H(+)(out). It catalyses the reaction a plastoquinone + NADPH + (n+1) H(+)(in) = a plastoquinol + NADP(+) + n H(+)(out). Functionally, NDH shuttles electrons from NAD(P)H:plastoquinone, via FMN and iron-sulfur (Fe-S) centers, to quinones in the photosynthetic chain and possibly in a chloroplast respiratory chain. The immediate electron acceptor for the enzyme in this species is believed to be plastoquinone. Couples the redox reaction to proton translocation, and thus conserves the redox energy in a proton gradient. The protein is NAD(P)H-quinone oxidoreductase subunit 5, chloroplastic (ndhF) of Nasturtium officinale (Watercress).